We begin with the raw amino-acid sequence, 1479 residues long: Protein CHROMATIN REMODELING 20 (1479 aa).

Residues 19-49 (EVIVESKEDEMDIIIEENREAEQEVMEVKAR) are a coiled coil. Basic and acidic residues predominate over residues 40–55 (EQEVMEVKARDGRGEQ). The tract at residues 40 to 109 (EQEVMEVKAR…DELDLEKPLS (70 aa)) is disordered. A compositionally biased stretch (low complexity) spans 76–86 (DASSRSESSDF). Residues 94-109 (ILSRRDDELDLEKPLS) show a composition bias toward basic and acidic residues. Residues 109–199 (SEEEIDELIS…EQLDGAGIEL (91 aa)) adopt a coiled-coil conformation. The ADD domain occupies 472–601 (RDDSQNPANN…KKSIELSSDS (130 aa)). The GATA-type; atypical zinc-finger motif lies at 483-514 (RCTACNKVAVEVHSHPLLEVIVCMDCKRSIED). The segment at 524–577 (ERHCEWCGHIADLIDCRTCEKLFCASCIKRNIGEEYMSEAQSSGWDCCCCSPIP) adopts a PHD-type; atypical zinc-finger fold. A coiled-coil region spans residues 578-598 (LQRLTLELEKAMRDKKSIELS). The interval 594–615 (SIELSSDSSSDSSSDNNSVDTD) is disordered. Residues 598-615 (SSDSSSDSSSDNNSVDTD) are compositionally biased toward low complexity. In terms of domain architecture, Helicase ATP-binding spans 741–924 (VKSGDKGLGC…YCMVDFVREG (184 aa)). 754–761 (HTMGLGKT) is a binding site for ATP. A DEAH box motif is present at residues 875-878 (DEAH). Residues 1122–1290 (DILSMSADVG…QVHRTISKEE (169 aa)) form the Helicase C-terminal domain. The segment at 1400–1423 (SESPVVPKPSPSTQTEPLPQPKGF) is disordered.

The protein belongs to the SNF2/RAD54 helicase family.

The protein resides in the nucleus. It is found in the chromosome. The protein localises to the telomere. Functionally, involved in transcriptional regulation and chromatin remodeling. Facilitates DNA replication in multiple cellular environments and is required for efficient replication of a subset of genomic loci. Binds to DNA tandem repeat sequences in both telomeres and euchromatin and in vitro binds DNA quadruplex structures. May help stabilizing G-rich regions into regular chromatin structures by remodeling G4 DNA and incorporating H3.3-containing nucleosomes. Involved in DNA repair of gamma-irradiation-mediated damages. The polypeptide is Protein CHROMATIN REMODELING 20 (Arabidopsis thaliana (Mouse-ear cress)).